The primary structure comprises 542 residues: GATA-type transcription factor sreA (542 aa).

Residues 1-10 (MLTLRSSSDT) show a composition bias toward polar residues. Positions 1–172 (MLTLRSSSDT…SAQNASGCGS (172 aa)) are disordered. The segment covering 44-63 (ADLRPDSFDASRSPDGDKAS) has biased composition (basic and acidic residues). Composition is skewed to low complexity over residues 75–117 (SSDQ…PKAS) and 148–168 (SSTSDPRASPAASDASAQNAS). Positions 178-196 (CPGGGSCNGTGGAVGCDGC) are cystein-rich region (CRR). A compositionally biased stretch (low complexity) spans 210 to 223 (APSARQARASPSAQ). The disordered stretch occupies residues 210-248 (APSARQARASPSAQTSEEQAQSGLDALDSASQDASGMPK). The segment at 250 to 274 (CQNCGTTLTPLWRRDDQGNTICNAC) adopts a GATA-type zinc-finger fold. The span at 289-300 (MKKTVIKRRKRV) shows a compositional bias: basic residues. Disordered stretches follow at residues 289 to 408 (MKKT…PATR) and 461 to 525 (SNAP…REAE). 2 stretches are compositionally biased toward polar residues: residues 311–320 (AGSSDNSSVS) and 369–387 (KPTQSTSSPGLNTLINHSP). Low complexity predominate over residues 396-407 (ESTSAESAPPAT). The segment covering 464–483 (PARSQTQTQPQPGTRSYSPN) has biased composition (polar residues). Positions 510-542 (DKVKAARRAQLQREAENMREALRAKERELASLK) form a coiled coil.

The protein localises to the nucleus. Its function is as follows. GATA-type transcription repressor that regulates iron acquisition genes through specific binding the GATA sequence elements of target promoters. SreA targets include genes encoding a number of key iron-regulated factors such as the siderophore biosynthesis genes. Is dispensable for growth on keratin substrates. SreA represses the expression of hapX and the siderophore system during iron sufficient conditions by an iron-sensing mechanism, while hapX represses sreA and activates the siderophore system during iron-limiting conditions resulting in efficient iron uptake and inhibition of iron-consuming pathways. This is GATA-type transcription factor sreA from Arthroderma benhamiae (strain ATCC MYA-4681 / CBS 112371) (Trichophyton mentagrophytes).